Consider the following 275-residue polypeptide: Glycerol-3-phosphate dehydrogenase [NAD(P)+] (275 aa).

The NADPH site is built by Trp12, Arg32, and Lys105. Positions 105, 133, and 135 each coordinate sn-glycerol 3-phosphate. Ala137 is an NADPH binding site. Positions 188, 241, 251, 252, and 253 each coordinate sn-glycerol 3-phosphate. The Proton acceptor role is filled by Lys188. Arg252 is a binding site for NADPH.

This sequence belongs to the NAD-dependent glycerol-3-phosphate dehydrogenase family.

The protein localises to the cytoplasm. It carries out the reaction sn-glycerol 3-phosphate + NAD(+) = dihydroxyacetone phosphate + NADH + H(+). The catalysed reaction is sn-glycerol 3-phosphate + NADP(+) = dihydroxyacetone phosphate + NADPH + H(+). The protein operates within membrane lipid metabolism; glycerophospholipid metabolism. In terms of biological role, catalyzes the reduction of the glycolytic intermediate dihydroxyacetone phosphate (DHAP) to sn-glycerol 3-phosphate (G3P), the key precursor for phospholipid synthesis. The polypeptide is Glycerol-3-phosphate dehydrogenase [NAD(P)+] (Paramagnetospirillum magneticum (strain ATCC 700264 / AMB-1) (Magnetospirillum magneticum)).